Consider the following 723-residue polypeptide: Probable G-protein coupled receptor 149 (723 aa).

Over 1–31 the chain is Extracellular; that stretch reads MSVMPSNLSLNGTSFFAENHSIMDKPNEQRT. N-linked (GlcNAc...) asparagine glycans are attached at residues Asn7, Asn11, and Asn19. The chain crosses the membrane as a helical span at residues 32-52; that stretch reads LNVFLFCSTFIIAFTVLLGSI. Over 53–69 the chain is Cytoplasmic; that stretch reads YSLVSLLKLQNKSTISM. A helical membrane pass occupies residues 70–90; the sequence is IVTSLSIDDLISIVPVIIFML. The Extracellular segment spans residues 91–106; sequence TQWSSDALPQPLCTTS. Cys103 and Cys181 are joined by a disulfide. Residues 107-127 form a helical membrane-spanning segment; it reads ALIYLFQGISSNLKGSLIVSY. Topologically, residues 128-148 are cytoplasmic; the sequence is NFYSINKTETMNCSASKRRVS. A helical transmembrane segment spans residues 149–169; the sequence is MVWAILSIWIVSLLICILPLC. The Extracellular portion of the chain corresponds to 170-188; it reads GWGKYIPTTWGCFTDHASS. The chain crosses the membrane as a helical span at residues 189-209; it reads YILFLFIVYSLCFCLLTVLSV. Residues 210 to 306 lie on the Cytoplasmic side of the membrane; it reads PLTYQLLCSD…SFTVGFAQKR (97 aa). The chain crosses the membrane as a helical span at residues 307–327; that stretch reads FSLILALTKVILWLPMMIQMV. Residues 328-338 are Extracellular-facing; that stretch reads VQHITGYQSFS. A helical membrane pass occupies residues 339-359; that stretch reads FETLSFLLTLLAATVTPVFVL. Topologically, residues 360 to 723 are cytoplasmic; it reads SEHWIHLPCG…RKREEDGNSN (364 aa). Residues 451–513 are disordered; sequence TTDSARPGPA…ERRLSHEEGH (63 aa). Residues 501-513 show a composition bias toward basic and acidic residues; sequence EGPERRLSHEEGH.

Belongs to the G-protein coupled receptor 1 family. Specific expression in peripheral nervous system, including nerve growth factor-dependent sensory and sympathetic neurons, as well as enteric neurons.

It is found in the cell membrane. In terms of biological role, orphan receptor. The chain is Probable G-protein coupled receptor 149 (GPR149) from Gallus gallus (Chicken).